The chain runs to 142 residues: Large ribosomal subunit protein bL17 (142 aa).

This sequence belongs to the bacterial ribosomal protein bL17 family. In terms of assembly, part of the 50S ribosomal subunit. Contacts protein L32.

The sequence is that of Large ribosomal subunit protein bL17 from Bartonella henselae (strain ATCC 49882 / DSM 28221 / CCUG 30454 / Houston 1) (Rochalimaea henselae).